The primary structure comprises 512 residues: 2,3-bisphosphoglycerate-independent phosphoglycerate mutase (512 aa).

2 residues coordinate Mn(2+): Asp-11 and Ser-61. The active-site Phosphoserine intermediate is Ser-61. Residues His-122, 152–153 (RD), Arg-184, Arg-190, 259–262 (RADR), and Lys-332 each bind substrate. 5 residues coordinate Mn(2+): Asp-399, His-403, Asp-440, His-441, and His-459.

This sequence belongs to the BPG-independent phosphoglycerate mutase family. Monomer. It depends on Mn(2+) as a cofactor.

It carries out the reaction (2R)-2-phosphoglycerate = (2R)-3-phosphoglycerate. It functions in the pathway carbohydrate degradation; glycolysis; pyruvate from D-glyceraldehyde 3-phosphate: step 3/5. Functionally, catalyzes the interconversion of 2-phosphoglycerate and 3-phosphoglycerate. The protein is 2,3-bisphosphoglycerate-independent phosphoglycerate mutase of Francisella tularensis subsp. tularensis (strain FSC 198).